The primary structure comprises 516 residues: 2,3-bisphosphoglycerate-independent phosphoglycerate mutase (516 aa).

2 residues coordinate Mn(2+): aspartate 14 and serine 64. Serine 64 functions as the Phosphoserine intermediate in the catalytic mechanism. Residues histidine 125, arginine 155–aspartate 156, arginine 187, arginine 193, arginine 263–arginine 266, and lysine 337 each bind substrate. The Mn(2+) site is built by aspartate 404, histidine 408, aspartate 445, histidine 446, and histidine 464.

It belongs to the BPG-independent phosphoglycerate mutase family. In terms of assembly, monomer. Mn(2+) is required as a cofactor.

It catalyses the reaction (2R)-2-phosphoglycerate = (2R)-3-phosphoglycerate. Its pathway is carbohydrate degradation; glycolysis; pyruvate from D-glyceraldehyde 3-phosphate: step 3/5. Functionally, catalyzes the interconversion of 2-phosphoglycerate and 3-phosphoglycerate. The protein is 2,3-bisphosphoglycerate-independent phosphoglycerate mutase of Saccharophagus degradans (strain 2-40 / ATCC 43961 / DSM 17024).